Reading from the N-terminus, the 401-residue chain is MIVQDSVCSELMRGCEEILPVPELEKKLQKGIPLKIKAGFDPTAPDLHLGHTVLLNKLRQFQQFGHEVIFLIGDFTAMIGDPTGKNVTRMPLSQETVLENAKTYQHQVFKILDPDKTTVAFNSQWLNKFNAVDLIRLAATHTVARMLERDDFNKRYTTGQPIAIHEFLYPLLQGYDSVALKADVELGGTDQKFNLLMGRELQKHYGFEPQVVMMTPLIEGLDGVKKMSKSLDNYIGINETPEQIFGKIMSVSDELMWRYIDLLSFKTGKEIQQLKQSVLEGKNPRDVKIDFAKEIVARFHDQTQAELAHNNFIERFQKGNIPEDLEELSLVIVEPIALAQLLKQIDLTASTSESIRMVKQGAVKVDGDKISDPSLKLPIGKSYIIQVGKRRIAKLSIQQAD.

Positions 42–51 (PTAPDLHLGH) match the 'HIGH' region motif. Positions 226 to 230 (KMSKS) match the 'KMSKS' region motif. Residue Lys-229 participates in ATP binding. The region spanning 336-397 (IALAQLLKQI…GKRRIAKLSI (62 aa)) is the S4 RNA-binding domain.

It belongs to the class-I aminoacyl-tRNA synthetase family. TyrS type 2 subfamily. As to quaternary structure, homodimer.

The protein localises to the cytoplasm. It catalyses the reaction tRNA(Tyr) + L-tyrosine + ATP = L-tyrosyl-tRNA(Tyr) + AMP + diphosphate + H(+). Its function is as follows. Catalyzes the attachment of tyrosine to tRNA(Tyr) in a two-step reaction: tyrosine is first activated by ATP to form Tyr-AMP and then transferred to the acceptor end of tRNA(Tyr). The polypeptide is Tyrosine--tRNA ligase (Legionella pneumophila (strain Paris)).